We begin with the raw amino-acid sequence, 520 residues long: ATP synthase subunit alpha (520 aa).

169-176 provides a ligand contact to ATP; that stretch reads GDRKTGKT.

Belongs to the ATPase alpha/beta chains family. As to quaternary structure, F-type ATPases have 2 components, CF(1) - the catalytic core - and CF(0) - the membrane proton channel. CF(1) has five subunits: alpha(3), beta(3), gamma(1), delta(1), epsilon(1). CF(0) has three main subunits: a(1), b(2) and c(9-12). The alpha and beta chains form an alternating ring which encloses part of the gamma chain. CF(1) is attached to CF(0) by a central stalk formed by the gamma and epsilon chains, while a peripheral stalk is formed by the delta and b chains.

The protein resides in the cell membrane. It catalyses the reaction ATP + H2O + 4 H(+)(in) = ADP + phosphate + 5 H(+)(out). Produces ATP from ADP in the presence of a proton gradient across the membrane. The alpha chain is a regulatory subunit. The polypeptide is ATP synthase subunit alpha (Oenococcus oeni (strain ATCC BAA-331 / PSU-1)).